The primary structure comprises 186 residues: Single-stranded DNA-binding protein 1 (186 aa).

Residues 1–108 form the SSB domain; it reads MDATVTVVGN…LEIDEIGPTL (108 aa). The disordered stretch occupies residues 120 to 186; it reads QAGHGVSPDP…EDFDSDEVPF (67 aa). Polar residues predominate over residues 132 to 141; that stretch reads DSQTGQGIDS. Residues 175–186 are compositionally biased toward acidic residues; the sequence is SYEDFDSDEVPF.

Homotetramer.

The sequence is that of Single-stranded DNA-binding protein 1 (ssb1) from Tropheryma whipplei (strain TW08/27) (Whipple's bacillus).